The following is a 345-amino-acid chain: Transcription factor STKL1 (345 aa).

The tract at residues 1–145 (MASLENPAID…KKGHAQRVWS (145 aa)) is disordered. Residues 11–22 (SSSEFESSSEEI) are compositionally biased toward low complexity. Residues 23-32 (SSSKESKPKE) show a composition bias toward basic and acidic residues. Over residues 37-46 (VPSTKTLNSP) the composition is skewed to polar residues. Ser105 is modified (phosphoserine). The span at 114–137 (RASEGTTSRDMHVKRIKKEGDNKK) shows a compositional bias: basic and acidic residues.

This sequence belongs to the GeBP family. Expressed strongly in leaves and flowers, weakly in roots, and very weakly in stems.

It is found in the nucleus. Its function is as follows. Transcription repressor that binds DNA in a sequence-specific manner, 5'-GCCT-3', to regulate the expression of PGR. Acts as a modulatory component for the glucose-triggered developmental leaf growth process. The polypeptide is Transcription factor STKL1 (Arabidopsis thaliana (Mouse-ear cress)).